The primary structure comprises 196 residues: GTP cyclohydrolase-2 (196 aa).

Residue 49-53 (RVHSE) coordinates GTP. Zn(2+) is bound by residues Cys-54, Cys-65, and Cys-67. GTP is bound by residues Gln-70, 92 to 94 (EGR), and Thr-114. The active-site Proton acceptor is Asp-126. The active-site Nucleophile is the Arg-128. GTP contacts are provided by Thr-149 and Lys-154.

Belongs to the GTP cyclohydrolase II family. In terms of assembly, homodimer. Requires Zn(2+) as cofactor.

The enzyme catalyses GTP + 4 H2O = 2,5-diamino-6-hydroxy-4-(5-phosphoribosylamino)-pyrimidine + formate + 2 phosphate + 3 H(+). The protein operates within cofactor biosynthesis; riboflavin biosynthesis; 5-amino-6-(D-ribitylamino)uracil from GTP: step 1/4. Functionally, catalyzes the conversion of GTP to 2,5-diamino-6-ribosylamino-4(3H)-pyrimidinone 5'-phosphate (DARP), formate and pyrophosphate. The polypeptide is GTP cyclohydrolase-2 (Escherichia coli O45:K1 (strain S88 / ExPEC)).